Consider the following 316-residue polypeptide: 4-hydroxyphenylacetate decarboxylase activating enzyme (316 aa).

A Radical SAM core domain is found at 20 to 307 (HDGPGCRTTV…QDIFLDNGIA (288 aa)). The [4Fe-4S] cluster site is built by Cys-34, Cys-38, Cys-41, Cys-60, Cys-66, Cys-69, and Cys-105. 40 to 42 (WCA) provides a ligand contact to S-adenosyl-L-methionine. A 4Fe-4S ferredoxin-type domain is found at 84-115 (NKPVIDWNICKDCESFECVNSCYYNAFKLCAK). Residues Gly-144, 193–195 (DIK), and His-267 contribute to the S-adenosyl-L-methionine site.

The protein belongs to the organic radical-activating enzymes family. Monomer. Requires [4Fe-4S] cluster as cofactor.

It carries out the reaction glycyl-[protein] + reduced [flavodoxin] + S-adenosyl-L-methionine = glycin-2-yl radical-[protein] + semiquinone [flavodoxin] + 5'-deoxyadenosine + L-methionine + H(+). Functionally, catalyzes activation of 4-hydroxyphenylacetate decarboxylase under anaerobic conditions by generation of an organic free radical on a glycine residue, via a homolytic cleavage of S-adenosyl-L-methionine (SAM). The protein is 4-hydroxyphenylacetate decarboxylase activating enzyme of Clostridioides difficile (strain CD196) (Peptoclostridium difficile).